The following is a 669-amino-acid chain: Histone-lysine N-methyltransferase, H3 lysine-9 specific SUVH3 (669 aa).

2 disordered regions span residues 56–127 (YSSF…EKKT) and 270–290 (ESLIYSGQGGNADKNRQASDQ). 2 stretches are compositionally biased toward polar residues: residues 65-82 (QQPTHDTPDLNQTQNTPI) and 93-107 (RTPTKTNGPSSSSGT). Positions 108–120 (KRGVGRPKGTTSV) form a DNA-binding region, a.T hook. The YDG domain maps to 208–355 (GTVPGIEVGD…CNTFKYKLVR (148 aa)). The Pre-SET domain maps to 430–491 (IGCSCSGSCS…SCKNRVIQTG (62 aa)). C432, C434, C438, C445, C447, C473, C477, C479, and C483 together coordinate Zn(2+). Residues 494-638 (SRLEVFKTRN…PMAELTYDYG (145 aa)) enclose the SET domain. Residues 504-506 (RGW), D540, Y542, R592, and 595-596 (NH) contribute to the S-adenosyl-L-methionine site. Zn(2+) contacts are provided by C598, C657, C659, and C664. One can recognise a Post-SET domain in the interval 653-669 (GQRTCLCGSEQCRGSFG).

The protein belongs to the class V-like SAM-binding methyltransferase superfamily. Histone-lysine methyltransferase family. Suvar3-9 subfamily. Expressed in leaves stems and flowers.

It is found in the nucleus. It localises to the chromosome. Its subcellular location is the centromere. The catalysed reaction is L-lysyl(9)-[histone H3] + S-adenosyl-L-methionine = N(6)-methyl-L-lysyl(9)-[histone H3] + S-adenosyl-L-homocysteine + H(+). Its function is as follows. Histone methyltransferase. Methylates 'Lys-9' of histone H3. H3 'Lys-9' methylation represents a specific tag for epigenetic transcriptional repression. The chain is Histone-lysine N-methyltransferase, H3 lysine-9 specific SUVH3 (SUVH3) from Arabidopsis thaliana (Mouse-ear cress).